Reading from the N-terminus, the 333-residue chain is Taste receptor type 2 member 123 (333 aa).

Over 1–14 (MFSQKTNYSHLFTF) the chain is Extracellular. A helical membrane pass occupies residues 15–37 (SIIFYVEIVTGILGNGFIALVNI). Over 38–57 (MDWLKRRRISTADQILTALA) the chain is Cytoplasmic. Residues 58–77 (LTRLIYVWSVLICILLLFLC) traverse the membrane as a helical segment. Residues 78–91 (PHLSMRPEMFTAIG) are Extracellular-facing. The helical transmembrane segment at 92-114 (VIWVVDNHFSIWLATCLGVFYFL) threads the bilayer. The Cytoplasmic segment spans residues 115–133 (KIASFSNSLFLYLKWRVKK). The helical transmembrane segment at 134-156 (VVLMIILISLIFLMLNISSLGMY) threads the bilayer. The Extracellular portion of the chain corresponds to 157–204 (DHFSIDVYEGNMSYNLVDSTHFPRIFLFTNSSKVFLIANSSHVFLPIN). N-linked (GlcNAc...) asparagine glycans are attached at residues Asn-167, Asn-186, and Asn-195. The chain crosses the membrane as a helical span at residues 205 to 227 (SLFMLIPFTVSLVAFFVLFLSLW). The Cytoplasmic portion of the chain corresponds to 228 to 250 (KHHKKMQVNAKGPRDASTMAHTK). Residues 251–273 (ALQIGFSFLLLYAIYLLFIITGI) form a helical membrane-spanning segment. Topologically, residues 274–282 (LNLDLMRCI) are extracellular. A helical membrane pass occupies residues 283–305 (VILLFDHISGAVFSISHSFVLIL). At 306–333 (GNSKLRQATLSVLPCLRCRSKDMDTVVF) the chain is on the cytoplasmic side.

This sequence belongs to the G-protein coupled receptor T2R family. As to expression, expressed in subsets of taste receptor cells of the tongue and palate epithelium and exclusively in gustducin-positive cells. Expressed in the antrum and fundus (part of the stomach), duodenum and in gastric endocrine cells.

It is found in the membrane. Gustducin-coupled receptor implicated in the perception of bitter compounds in the oral cavity and the gastrointestinal tract. Signals through PLCB2 and the calcium-regulated cation channel TRPM5. In Rattus norvegicus (Rat), this protein is Taste receptor type 2 member 123 (Tas2r123).